Consider the following 255-residue polypeptide: Probable septum site-determining protein MinC (255 aa).

A compositionally biased stretch (basic and acidic residues) spans 103–115; that stretch reads SHGRRPRGERSEE. A disordered region spans residues 103–136; it reads SHGRRPRGERSEEAAEAVPAAAEPVPAPAASPAP. Positions 127–136 are enriched in pro residues; that stretch reads VPAPAASPAP.

Belongs to the MinC family. As to quaternary structure, interacts with MinD and FtsZ.

In terms of biological role, cell division inhibitor that blocks the formation of polar Z ring septums. Rapidly oscillates between the poles of the cell to destabilize FtsZ filaments that have formed before they mature into polar Z rings. Prevents FtsZ polymerization. The protein is Probable septum site-determining protein MinC of Ralstonia nicotianae (strain ATCC BAA-1114 / GMI1000) (Ralstonia solanacearum).